Here is a 359-residue protein sequence, read N- to C-terminus: Type-1 angiotensin II receptor (359 aa).

Residues 1 to 25 are Extracellular-facing; it reads MALNSSADDGIKRIQDDCPKAGRHS. Asparagine 4 carries N-linked (GlcNAc...) asparagine glycosylation. Angiotensin II-binding residues include glutamine 15 and aspartate 17. Disulfide bonds link cysteine 18–cysteine 274 and cysteine 101–cysteine 180. The chain crosses the membrane as a helical span at residues 26–55; it reads YIFVMIPTLYSIIFVVGIFGNSLVVIVIYF. The Cytoplasmic portion of the chain corresponds to 56 to 61; sequence YMKLKT. A helical membrane pass occupies residues 62–89; that stretch reads VASVFLLNLALADLCFLLTLPVWAVYTA. The Extracellular segment spans residues 90-98; it reads MEYRWPFGN. Residues 99-125 form a helical membrane-spanning segment; sequence HLCKIASAGISFNLYASVFLLTCLSID. Over 126 to 141 the chain is Cytoplasmic; it reads RYLAIVHPMKSRLRRT. The helical transmembrane segment at 142 to 165 threads the bilayer; the sequence is MLVAKVTCVVIWLLAGLASLPAVI. Residues 166–190 are Extracellular-facing; sequence HRNVYFIENTNSTVCAFHYESQNST. Arginine 167 is an angiotensin II binding site. Residue asparagine 176 is glycosylated (N-linked (GlcNAc...) asparagine). Phenylalanine 182, histidine 183, and tyrosine 184 together coordinate angiotensin II. The N-linked (GlcNAc...) asparagine glycan is linked to asparagine 188. Residues 191–216 form a helical membrane-spanning segment; it reads LPVGLGLTKNILGFMFPFLIILTSYT. Position 199 (lysine 199) interacts with angiotensin II. The Cytoplasmic segment spans residues 217–239; it reads LIWKALKKAYEIQKNKPRNDDIF. The chain crosses the membrane as a helical span at residues 240–268; the sequence is RIIMAIVLFFFFSWIPHQIFTFLDVLIQL. The Extracellular portion of the chain corresponds to 269–278; sequence GVIRDCKIAD. The chain crosses the membrane as a helical span at residues 279–304; it reads VVDTAMPITICIAYFNNCLNPLFYGF. Residues 305–359 are Cytoplasmic-facing; sequence LGKKFKKYFLQLLKYIPPKAKSHSSLSTKMSTLSYRPSDNMNSSAKKPASCFEVE. A lipid anchor (S-palmitoyl cysteine) is attached at cysteine 355.

Belongs to the G-protein coupled receptor 1 family. As to quaternary structure, interacts with MAS1. Interacts with ARRB1. Interacts with FLNA (via filamin repeat 21); increases PKA-mediated phosphorylation of FLNA. C-terminal Ser or Thr residues may be phosphorylated.

Its subcellular location is the cell membrane. Receptor for angiotensin II, a vasoconstricting peptide, which acts as a key regulator of blood pressure and sodium retention by the kidney. The activated receptor in turn couples to G-alpha proteins G(q) (GNAQ, GNA11, GNA14 or GNA15) and thus activates phospholipase C and increases the cytosolic Ca(2+) concentrations, which in turn triggers cellular responses such as stimulation of protein kinase C. This is Type-1 angiotensin II receptor (AGTR1) from Meriones unguiculatus (Mongolian jird).